Here is a 129-residue protein sequence, read N- to C-terminus: MSFGLVGTVNNNGWKSPFRHETKYRAGYDKFKYYKTHYRGAKKAGTNDDRWRWTAWFDLDFAHQKIVLIERGELHRQADLKKSDPATNETSKTVWGSIKEKLLQNVNNLHSEKGVFLWFRQSGFTTTRN.

The protein to M.pneumoniae MPN_376 N-terminal region.

This is an uncharacterized protein from Mycoplasma pneumoniae (strain ATCC 29342 / M129 / Subtype 1) (Mycoplasmoides pneumoniae).